The primary structure comprises 699 residues: uncharacterized protein (699 aa).

Disordered regions lie at residues 175–208 (PTLG…ASLS), 289–364 (PTAK…EEPD), and 539–603 (RAKE…KEYL). Residues 183-194 (PSKHGDHSDSKT) are compositionally biased toward basic and acidic residues. Residues 195–208 (YESPISNSQAASLS) are compositionally biased toward polar residues. Over residues 308-322 (SKHKKRPKRLSKFKQ) the composition is skewed to basic residues. The span at 323–338 (AKLETKKSGNKDHATS) shows a compositional bias: basic and acidic residues. 2 stretches are compositionally biased toward polar residues: residues 339-360 (SEKL…SSSI) and 548-573 (HSNA…NTKL). A compositionally biased stretch (basic and acidic residues) spans 574–603 (NPKEEDKSTVESELKAPPKEKSSETSKEYL).

The protein resides in the cytoplasm. This is an uncharacterized protein from Schizosaccharomyces pombe (strain 972 / ATCC 24843) (Fission yeast).